A 1819-amino-acid chain; its full sequence is U3 small nucleolar RNA-associated protein 10 (1819 aa).

One copy of the HEAT 1 repeat lies at 583–620; it reads LDFQAILPFLLVALADPSERIRREAAAALAAIGGIYKK. 2 consecutive transmembrane segments (helical) span residues 945-965 and 1001-1021; these read IQSG…AIVN and ALLL…HSVM. HEAT repeat units lie at residues 1045–1082, 1269–1306, 1313–1351, and 1775–1812; these read QTID…AFEH, LTLV…QNPE, IRVL…KYGK, and ALLP…VLGE.

This sequence belongs to the HEATR1/UTP10 family. Component of the ribosomal small subunit (SSU) processome.

Its subcellular location is the nucleus. It is found in the nucleolus. The protein resides in the membrane. Its function is as follows. Involved in nucleolar processing of pre-18S ribosomal RNA. Involved in ribosome biosynthesis. In Aspergillus clavatus (strain ATCC 1007 / CBS 513.65 / DSM 816 / NCTC 3887 / NRRL 1 / QM 1276 / 107), this protein is U3 small nucleolar RNA-associated protein 10.